The sequence spans 352 residues: Protein RecA (352 aa).

74-81 is an ATP binding site; sequence GPESSGKT.

It belongs to the RecA family.

The protein resides in the cytoplasm. Its function is as follows. Can catalyze the hydrolysis of ATP in the presence of single-stranded DNA, the ATP-dependent uptake of single-stranded DNA by duplex DNA, and the ATP-dependent hybridization of homologous single-stranded DNAs. It interacts with LexA causing its activation and leading to its autocatalytic cleavage. The sequence is that of Protein RecA from Ralstonia nicotianae (strain ATCC BAA-1114 / GMI1000) (Ralstonia solanacearum).